We begin with the raw amino-acid sequence, 247 residues long: uncharacterized protein (247 aa).

The segment at 225-247 (LASAPVPPSGSGNSGHRRANLGL) is disordered.

This is an uncharacterized protein from Methanocaldococcus jannaschii (strain ATCC 43067 / DSM 2661 / JAL-1 / JCM 10045 / NBRC 100440) (Methanococcus jannaschii).